The sequence spans 309 residues: Polyprenal reductase (309 aa).

Residues 1 to 3 (MFH) are Cytoplasmic-facing. Residues 4–24 (ILSIVNIIWLLLALCFGAAFC) traverse the membrane as a helical segment. The Lumenal segment spans residues 25-67 (LNKFSVKLPNRVEHVFQDFIRYGKTKENIKRASWQLVFDLSKR). Residues 68 to 88 (YFYHFYVVSVMWNGLLLLFSI) form a helical membrane-spanning segment. Residues 89–114 (RSVVMSEAFPDWIIDVLGSLTGRSRG) lie on the Cytoplasmic side of the membrane. A helical membrane pass occupies residues 115-135 (AWNEIHLSTLLLQVLLWVHTL). Residues 136-150 (RRLLECLFVSVFSDG) are Lumenal-facing. The helical transmembrane segment at 151 to 171 (VINVVQYAFGLSYYIILGLTV) threads the bilayer. Topologically, residues 172 to 185 (LCTNDSLPQSESVS) are cytoplasmic. The chain crosses the membrane as a helical span at residues 186 to 206 (FFNQLTWYHVVGTLLFFWASF). Topologically, residues 207–255 (LQHQSLSLLAKMRTDSSGKVETLAHKMPCGGWFELVSCPHYLAELLIYA) are lumenal. The helical transmembrane segment at 256-276 (AMCVCCGCASLTWWMVVLYVL) threads the bilayer. The Cytoplasmic portion of the chain corresponds to 277 to 309 (CNQALAAQLCHEYYRSKFKTYPHHRKAFIPFVL).

It belongs to the steroid 5-alpha reductase family. Polyprenal reductase subfamily.

It is found in the endoplasmic reticulum membrane. The catalysed reaction is a di-trans,poly-cis-dolichal + NADP(+) = a di-trans,poly-cis-polyprenal + NADPH + H(+). It carries out the reaction a 3-oxo-5alpha-steroid + NADP(+) = a 3-oxo-Delta(4)-steroid + NADPH + H(+). The enzyme catalyses androst-4-ene-3,17-dione + NADPH + H(+) = 5alpha-androstan-3,17-dione + NADP(+). It catalyses the reaction 17beta-hydroxy-5alpha-androstan-3-one + NADP(+) = testosterone + NADPH + H(+). It participates in protein modification; protein glycosylation. In terms of biological role, plays a key role in early steps of protein N-linked glycosylation by being involved in the conversion of polyprenol into dolichol. Acts as a polyprenal reductase that mediates the reduction of polyprenal into dolichal in a NADP-dependent mechanism. Dolichols are required for the synthesis of dolichol-linked monosaccharides and the oligosaccharide precursor used for N-glycosylation. Also able to convert testosterone (T) into 5-alpha-dihydrotestosterone (DHT). The polypeptide is Polyprenal reductase (srd5a3) (Danio rerio (Zebrafish)).